Here is a 137-residue protein sequence, read N- to C-terminus: Histone H2B (137 aa).

Residues 1 to 10 (MAPKAADKKP) are compositionally biased toward basic and acidic residues. The tract at residues 1 to 46 (MAPKAADKKPASKAPATASKAPEKKDAGKKTAASGDKKKRSKSRKE) is disordered. Lys8 and Lys9 each carry N6-acetyllysine; alternate. Glycyl lysine isopeptide (Lys-Gly) (interchain with G-Cter in SUMO); alternate cross-links involve residues Lys8 and Lys9. Ser12 bears the Phosphoserine mark. An N6-acetyllysine modification is found at Lys13. Lys24 is subject to N6-acetyllysine; alternate. A Glycyl lysine isopeptide (Lys-Gly) (interchain with G-Cter in SUMO); alternate cross-link involves residue Lys24. A Glycyl lysine isopeptide (Lys-Gly) (interchain with G-Cter in SUMO) cross-link involves residue Lys25. Lys131 participates in a covalent cross-link: Glycyl lysine isopeptide (Lys-Gly) (interchain with G-Cter in ubiquitin).

Belongs to the histone H2B family. As to quaternary structure, the nucleosome is a histone octamer containing two molecules each of H2A, H2B, H3 and H4 assembled in one H3-H4 heterotetramer and two H2A-H2B heterodimers. The octamer wraps approximately 147 bp of DNA. Monoubiquitinated by the UBC2-BRE1 complex to form H2BK123ub1. H2BK123ub1 gives a specific tag for epigenetic transcriptional activation and is also prerequisite for H3K4me and H3K79me formation. H2BK123ub1 also modulates the formation of double-strand breaks during meiosis and is a prerequisite for DNA-damage checkpoint activation. Post-translationally, phosphorylated to form H2BS10ph during progression through meiotic prophase. May be correlated with chromosome condensation. In terms of processing, acetylated by GCN5 to form H2BK11ac and H2BK16ac. H2BK16ac can also be formed by ESA1. Acetylation of N-terminal lysines and particularly formation of H2BK11acK16ac has a positive effect on transcription. Sumoylation to form H2BK6su or H2BK7su, and probably also H2BK16su or H2BK17su, occurs preferentially near the telomeres and represses gene transcription.

The protein resides in the nucleus. It is found in the chromosome. In terms of biological role, core component of nucleosome. Nucleosomes wrap and compact DNA into chromatin, limiting DNA accessibility to the cellular machineries which require DNA as a template. Histones thereby play a central role in transcription regulation, DNA repair, DNA replication and chromosomal stability. DNA accessibility is regulated via a complex set of post-translational modifications of histones, also called histone code, and nucleosome remodeling. In Gibberella zeae (strain ATCC MYA-4620 / CBS 123657 / FGSC 9075 / NRRL 31084 / PH-1) (Wheat head blight fungus), this protein is Histone H2B (HTB1).